The chain runs to 198 residues: Transcription factor IND (198 aa).

A disordered region spans residues M1–P33. The bHLH domain occupies I118–L167.

Homodimer. Heterodimer; possibly with ALC. As to expression, after fertilization, it is expressed in stripes about four cells wide at the margins of developing wild-type fruit. Also expressed in the inner valve layer, which becomes lignified later in fruit development. Detected in roots.

It is found in the nucleus. Transcription regulator required for seed dispersal. Involved in the differentiation of all three cell types required for fruit dehiscence. Acts as the key regulator in a network including SHP and ALC that controls specification of the valve margin. Works with ALC, SHP, and FUL to allow differentiation of the lignified valve layer, the spring-loaded mechanism of fruit that promotes opening. Regulates the expression of the YJ80 marker. The chain is Transcription factor IND (IND) from Arabidopsis thaliana (Mouse-ear cress).